We begin with the raw amino-acid sequence, 188 residues long: Anaphase-promoting complex subunit 10 (188 aa).

The 184-residue stretch at 4 to 187 (NSNINSNSRL…SPEVSMFQTL (184 aa)) folds into the DOC domain.

This sequence belongs to the APC10 family. In terms of assembly, the APC/C is composed of at least 13 subunits that stay tightly associated throughout the cell cycle: anapc1, anapc2, anapc3, anapc4, anapc5, anapc6, anapc7, anapc8, anapc10, anapc11, cdc20, cdc26 and cdh1.

The protein resides in the nucleus. Its pathway is protein modification; protein ubiquitination. Functionally, component of the anaphase promoting complex/cyclosome (APC/C), a cell cycle-regulated E3 ubiquitin-protein ligase complex that controls progression through mitosis and the G1 phase of the cell cycle. In Dictyostelium discoideum (Social amoeba), this protein is Anaphase-promoting complex subunit 10 (anapc10).